The chain runs to 251 residues: ATP synthase subunit a 2 (251 aa).

Helical transmembrane passes span 35–55 (GQVF…SLLA), 94–114 (LPFI…GSLI), 133–153 (INTT…AGLS), 198–218 (LVVA…LMAL), and 219–239 (GLFT…AYIH).

The protein belongs to the ATPase A chain family. F-type ATPases have 2 components, CF(1) - the catalytic core - and CF(0) - the membrane proton channel. CF(1) has five subunits: alpha(3), beta(3), gamma(1), delta(1), epsilon(1). CF(0) has four main subunits: a, b, b' and c.

The protein localises to the cellular thylakoid membrane. In terms of biological role, key component of the proton channel; it plays a direct role in the translocation of protons across the membrane. This is ATP synthase subunit a 2 from Crocosphaera subtropica (strain ATCC 51142 / BH68) (Cyanothece sp. (strain ATCC 51142)).